We begin with the raw amino-acid sequence, 227 residues long: Ribose-5-phosphate isomerase A (227 aa).

Substrate-binding positions include 30–33, 86–89, and 99–102; these read TGST, DGAD, and KGMG. The Proton acceptor role is filled by glutamate 108. A substrate-binding site is contributed by lysine 126.

This sequence belongs to the ribose 5-phosphate isomerase family. In terms of assembly, homodimer.

It carries out the reaction aldehydo-D-ribose 5-phosphate = D-ribulose 5-phosphate. It functions in the pathway carbohydrate degradation; pentose phosphate pathway; D-ribose 5-phosphate from D-ribulose 5-phosphate (non-oxidative stage): step 1/1. Its function is as follows. Catalyzes the reversible conversion of ribose-5-phosphate to ribulose 5-phosphate. This is Ribose-5-phosphate isomerase A from Thermus thermophilus (strain ATCC 27634 / DSM 579 / HB8).